The chain runs to 225 residues: Large ribosomal subunit protein bL25 (225 aa).

The segment at 206–225 (EDSKNKITKDNETNKDKSNL) is disordered.

The protein belongs to the bacterial ribosomal protein bL25 family. CTC subfamily. Part of the 50S ribosomal subunit; part of the 5S rRNA/L5/L18/L25 subcomplex. Contacts the 5S rRNA. Binds to the 5S rRNA independently of L5 and L18.

Functionally, this is one of the proteins that binds to the 5S RNA in the ribosome where it forms part of the central protuberance. The protein is Large ribosomal subunit protein bL25 of Vesicomyosocius okutanii subsp. Calyptogena okutanii (strain HA).